Consider the following 453-residue polypeptide: MPNNLQHQEGSYSLRSSNDVSPADDWTQTNDPKEKKRIQNRVAQRTYRNRIRARLEELENKIRCHEKASKQDGNENEDRASEKAMAQDFLITDQALQSLTLPRRVSSAGLSQEPATPPDLLLPSFFHQQQVKIPSAADELNQPKPPSSPPAWAEGQLNVAPRAAQARSIAPTSTGMHQISPSYGPPVFLPTEDLSIDIISSRGLSSSWKTAADLTVQGTHPLPAFPSCSLANIESPSPASSQATDPMDMTFHTATEANTAILPGHRSSLDERLEYVLERAEQVGFDNFDSLVTAYYSETFHGSSRLASEQRLSRNRRLPRVIAEIFRAASHWSAWERGGMNQEVIKSAECLLISEGTAARNALEGSLSLLVDGGNGSGDASSVERLVQNEIPNLWALMTSLASGTHSPRQQDRSGTALAAIMLLYFSGSMPKEQLLRLLIICLPDPVSPQKNN.

Polar residues predominate over residues 1-30; sequence MPNNLQHQEGSYSLRSSNDVSPADDWTQTN. The segment at 1–45 is disordered; sequence MPNNLQHQEGSYSLRSSNDVSPADDWTQTNDPKEKKRIQNRVAQR. In terms of domain architecture, bZIP spans 30–62; that stretch reads NDPKEKKRIQNRVAQRTYRNRIRARLEELENKI. The basic motif stretch occupies residues 33–50; the sequence is KEKKRIQNRVAQRTYRNR. Residues 51–58 form a leucine-zipper region; the sequence is IRARLEEL. The interval 160-184 is disordered; that stretch reads APRAAQARSIAPTSTGMHQISPSYG. Residues 170–181 are compositionally biased toward polar residues; it reads APTSTGMHQISP.

The protein belongs to the bZIP family.

It localises to the nucleus. Functionally, transcription factor that positively regulates the expression of the gene clusters that mediate the biosynthesis of pestheic acid, a diphenyl ether which is a biosynthetic precursor of the unique chloropupukeananes. In Floropilus chiversii (Chaetomium chiversii), this protein is Transcription factor radR.